A 614-amino-acid chain; its full sequence is Probable LRR receptor-like serine/threonine-protein kinase At5g63710 (614 aa).

Residues 1 to 50 form the signal peptide; it reads MAHSGNGESFHDPLRGFIQRNCFRWNNQKLILQCFMALAFVGITSSTTQP. Topologically, residues 51–224 are extracellular; it reads DIEGGALLQL…VTSSKKKLRD (174 aa). Residues Asn65, Asn125, Asn146, and Asn175 are each glycosylated (N-linked (GlcNAc...) asparagine). LRR repeat units lie at residues 115–139, 141–163, and 164–187; these read LKFLVTLELQNNSLSGALPDSLGNM, NLQTLNLSVNSFSGSIPASWSQL, and SNLKHLDLSSNNLTGSIPTQFFSI. A helical membrane pass occupies residues 225 to 245; the sequence is ITLTASCVASIILFLGAMVMY. At 246–613 the chain is on the cytoplasmic side; the sequence is HHHRVRRTKY…DQESIRLSTA (368 aa). The residue at position 286 (Thr286) is a Phosphothreonine. The Protein kinase domain occupies 289–573; that stretch reads FNESNLIGQG…GTGGLAEKWT (285 aa). An ATP-binding site is contributed by 295 to 303; the sequence is IGQGGFGKV. Residue Thr312 is modified to Phosphothreonine. Lys317 lines the ATP pocket. Ser370 is subject to Phosphoserine. Thr389 carries the phosphothreonine modification. Asp416 functions as the Proton acceptor in the catalytic mechanism. A phosphothreonine mark is found at Thr449, Thr450, and Thr455. At Tyr463 the chain carries Phosphotyrosine. Thr466 bears the Phosphothreonine mark. A Phosphoserine modification is found at Ser470. Thr545 carries the phosphothreonine modification.

It belongs to the protein kinase superfamily. Ser/Thr protein kinase family.

The protein resides in the cell membrane. It carries out the reaction L-seryl-[protein] + ATP = O-phospho-L-seryl-[protein] + ADP + H(+). The catalysed reaction is L-threonyl-[protein] + ATP = O-phospho-L-threonyl-[protein] + ADP + H(+). The chain is Probable LRR receptor-like serine/threonine-protein kinase At5g63710 from Arabidopsis thaliana (Mouse-ear cress).